Here is a 1370-residue protein sequence, read N- to C-terminus: DNA-directed RNA polymerase subunit beta (1370 aa).

This sequence belongs to the RNA polymerase beta chain family. In terms of assembly, the RNAP catalytic core consists of 2 alpha, 1 beta, 1 beta' and 1 omega subunit. When a sigma factor is associated with the core the holoenzyme is formed, which can initiate transcription.

The catalysed reaction is RNA(n) + a ribonucleoside 5'-triphosphate = RNA(n+1) + diphosphate. Its function is as follows. DNA-dependent RNA polymerase catalyzes the transcription of DNA into RNA using the four ribonucleoside triphosphates as substrates. The protein is DNA-directed RNA polymerase subunit beta of Bordetella bronchiseptica (strain ATCC BAA-588 / NCTC 13252 / RB50) (Alcaligenes bronchisepticus).